The chain runs to 316 residues: MNTSITARELFEQQRERLGLRWAAGKSGEKRELEAGNTVSRRPSLAGYLNAIYPNKVQILGTEELSWLDALEPRQRWETIEKIMQSHPLALVLTRNQPCPEDLRAAADESGTPLWLSPKRGHELLNHLSYHLARTLAPRVILHGVFMEIYSIGVLITGEAGSGKSELALELLSRGHRLVADDAPEFTQIAPDVLDGTCPELLQDLLEVRGLGVLNVREMFGDTAVKKNKYLRLIVHLTKPMTEPTPHGYERLTGDSGTRHVLDLDVPLITLPVMPGRNLAVLTEAATRLHILRTKGIDPAAMFIARHSNLLERRTP.

Catalysis depends on residues His-143 and Lys-164. Position 158 to 165 (158 to 165) interacts with ATP; that stretch reads GEAGSGKS. Ser-165 contacts Mg(2+). Residue Asp-182 is the Proton acceptor; for phosphorylation activity. Proton donor; for dephosphorylation activity of the active site. The interval 206 to 215 is important for the catalytic mechanism of both phosphorylation and dephosphorylation; the sequence is LEVRGLGVLN. Glu-207 lines the Mg(2+) pocket. Arg-251 is an active-site residue. The segment at 272–277 is important for the catalytic mechanism of dephosphorylation; sequence PVMPGR.

Belongs to the HPrK/P family. In terms of assembly, homohexamer. Mg(2+) is required as a cofactor.

It carries out the reaction [HPr protein]-L-serine + ATP = [HPr protein]-O-phospho-L-serine + ADP + H(+). The catalysed reaction is [HPr protein]-O-phospho-L-serine + phosphate + H(+) = [HPr protein]-L-serine + diphosphate. In terms of biological role, catalyzes the ATP- as well as the pyrophosphate-dependent phosphorylation of a specific serine residue in HPr, a phosphocarrier protein of the phosphoenolpyruvate-dependent sugar phosphotransferase system (PTS). HprK/P also catalyzes the pyrophosphate-producing, inorganic phosphate-dependent dephosphorylation (phosphorolysis) of seryl-phosphorylated HPr (P-Ser-HPr). The protein is HPr kinase/phosphorylase of Stenotrophomonas maltophilia (strain R551-3).